Consider the following 376-residue polypeptide: Dihydroorotate dehydrogenase (quinone) (376 aa).

Residues 74-78 (AGFDK) and Thr-98 each bind FMN. Substrate is bound at residue Lys-78. 123–127 (NRMGF) contacts substrate. Asn-155 and Asn-188 together coordinate FMN. Substrate is bound at residue Asn-188. Residue Ser-191 is the Nucleophile of the active site. Asn-193 is a substrate binding site. Residues Lys-226 and Thr-254 each coordinate FMN. Position 255–256 (255–256 (NT)) interacts with substrate. FMN is bound by residues Gly-284, Gly-313, and 334–335 (YT).

It belongs to the dihydroorotate dehydrogenase family. Type 2 subfamily. Monomer. It depends on FMN as a cofactor.

Its subcellular location is the cell membrane. It catalyses the reaction (S)-dihydroorotate + a quinone = orotate + a quinol. Its pathway is pyrimidine metabolism; UMP biosynthesis via de novo pathway; orotate from (S)-dihydroorotate (quinone route): step 1/1. Catalyzes the conversion of dihydroorotate to orotate with quinone as electron acceptor. The sequence is that of Dihydroorotate dehydrogenase (quinone) from Nostoc punctiforme (strain ATCC 29133 / PCC 73102).